The sequence spans 245 residues: Cypemycin N-terminal methyltransferase (245 aa).

The protein belongs to the methyltransferase superfamily.

The catalysed reaction is N-terminal L-alanyl-[cypemycin] + 2 S-adenosyl-L-methionine = N-terminal N,N-dimethyl-L-alanyl-[cypemycin] + 2 S-adenosyl-L-homocysteine + 3 H(+). Involved in the biosynthesis of the lanaridin cypemycin. The enzyme can methylate a variety of oligopeptides, cyclic peptides and the epsilon-amino group of lysine. This Streptomyces sp protein is Cypemycin N-terminal methyltransferase.